The chain runs to 499 residues: Potassium voltage-gated channel subfamily A member 2 (499 aa).

Positions Met-1–Ala-27 are disordered. The tract at residues Met-1–Met-125 is tetramerization domain. Topologically, residues Met-1–Gly-160 are cytoplasmic. The helical transmembrane segment at Pro-161–Leu-182 threads the bilayer. Residues Glu-183–Pro-221 are Extracellular-facing. Asn-207 carries N-linked (GlcNAc...) asparagine glycosylation. Residues Phe-222 to Ala-243 form a helical membrane-spanning segment. Cys-244 is lipidated: S-palmitoyl cysteine. Topologically, residues Cys-244–Ile-254 are cytoplasmic. A helical transmembrane segment spans residues Met-255 to Ala-275. Residues Glu-276–Ser-289 lie on the Extracellular side of the membrane. The chain crosses the membrane as a helical; Voltage-sensor span at residues Leu-290 to His-310. Topologically, residues Ser-311 to Met-325 are cytoplasmic. Residues Lys-312–Met-325 are S4-S5 linker. A helical membrane pass occupies residues Arg-326–Tyr-347. Topologically, residues Phe-348–Ile-361 are extracellular. An intramembrane region (helical) is located at residues Pro-362–Thr-373. The short motif at Thr-374–Asp-379 is the Selectivity filter element. The stretch at Thr-374–Val-381 is an intramembrane region. The Extracellular portion of the chain corresponds to Pro-382–Lys-388. The helical transmembrane segment at Ile-389–Tyr-417 threads the bilayer. Over His-418–Val-499 the chain is Cytoplasmic. Tyr-429 is modified (phosphotyrosine). Phosphoserine occurs at positions 434, 440, 441, and 449. Phosphotyrosine is present on Tyr-458. Phosphoserine is present on Ser-468. The PDZ-binding motif lies at Thr-497–Val-499.

This sequence belongs to the potassium channel family. A (Shaker) (TC 1.A.1.2) subfamily. Kv1.2/KCNA2 sub-subfamily. Homotetramer and heterotetramer with other channel-forming alpha subunits, such as KCNA1, KCNA4, KCNA5, KCNA6 and KCNA7. Channel activity is regulated by interaction with the beta subunits, including KCNAB1 and KCNAB2. Identified in a complex with KCNA1 and KCNAB2. Identified in a complex with KCNA5 and KCNAB1. Interacts with the beta subunit KCNAB1. Identified in a complex with KCNA4 and FYN. Interacts with PTK2B. Interacts (via C-terminus) with CTTN. Interacts (via N-terminal cytoplasmic domain) with RHOA (GTP-bound form); this regulates channel activity by reducing location at the cell surface in response to CHRM1 activation. Interacts with DRD2. Interacts with SIGMAR1; cocaine consumption leads to increased interaction. Interacts with ADAM22. Interacts with CNTNAP2. Interacts (via C-terminus) with the PDZ domains of DLG1, DLG2 and DLG4. Interacts with ADAM11. Interacts with LYNX1. In terms of processing, phosphorylated on tyrosine residues; phosphorylation increases in response to ischemia. Phosphorylated on tyrosine residues by activated PTK2B/PYK2. Phosphorylation on tyrosine residues suppresses ion channel activity. Phosphorylated on tyrosine residues in response to CHRM1 activation; this abolishes interaction with CTTN. This is probably due to endocytosis of the phosphorylated channel subunits. Phosphorylated on serine residues in response to increased cAMP levels; phosphorylation is apparently not catalyzed by PKA. Post-translationally, N-glycosylated, with complex, sialylated N-glycans. In terms of tissue distribution, expressed in a wide variety of gastrointestinal smooth muscles. Not expressed in portal vein, renal artery, and uterus.

The protein localises to the cell membrane. It localises to the membrane. It is found in the cell projection. The protein resides in the axon. Its subcellular location is the synapse. The protein localises to the presynaptic cell membrane. It localises to the synaptosome. It is found in the endoplasmic reticulum membrane. The protein resides in the dendrite. Its subcellular location is the lamellipodium membrane. The protein localises to the cell junction. It localises to the paranodal septate junction. The enzyme catalyses K(+)(in) = K(+)(out). Its activity is regulated as follows. Inhibited by 4-aminopyridine (4-AP). Inhibited by dendrotoxin (DTX) and charybdotoxin (CTX), but not by tetraethylammonium (TEA). Inhibited by tityustoxin-K alpha (TsTX-Kalpha), a toxin that is highly specific for KCNA2. Inhibited by maurotoxin. Inhibited by kappaM conotoxins kappaM-RIIIJ and kappaM-RIIIK. Voltage-gated potassium channel that mediates transmembrane potassium transport in excitable membranes, primarily in the brain and the central nervous system, but also in the cardiovascular system. Prevents aberrant action potential firing and regulates neuronal output. Forms tetrameric potassium-selective channels through which potassium ions pass in accordance with their electrochemical gradient. The channel alternates between opened and closed conformations in response to the voltage difference across the membrane. Can form functional homotetrameric channels and heterotetrameric channels that contain variable proportions of KCNA1, KCNA2, KCNA4, KCNA5, KCNA6, KCNA7, and possibly other family members as well; channel properties depend on the type of alpha subunits that are part of the channel. Channel properties are modulated by cytoplasmic beta subunits that regulate the subcellular location of the alpha subunits and promote rapid inactivation of delayed rectifier potassium channels. In vivo, membranes probably contain a mixture of heteromeric potassium channel complexes, making it difficult to assign currents observed in intact tissues to any particular potassium channel family member. Homotetrameric KCNA2 forms a delayed-rectifier potassium channel that opens in response to membrane depolarization, followed by slow spontaneous channel closure. In contrast, a heteromultimer formed by KCNA2 and KCNA4 shows rapid inactivation. Regulates neuronal excitability and plays a role as pacemaker in the regulation of neuronal action potentials. KCNA2-containing channels play a presynaptic role and prevent hyperexcitability and aberrant action potential firing. Response to toxins that are selective for KCNA2-containing potassium channels suggests that in Purkinje cells, dendritic subthreshold KCNA2-containing potassium channels prevent random spontaneous calcium spikes, suppressing dendritic hyperexcitability without hindering the generation of somatic action potentials, and thereby play an important role in motor coordination. Plays a role in the induction of long-term potentiation of neuron excitability in the CA3 layer of the hippocampus. May function as down-stream effector for G protein-coupled receptors and inhibit GABAergic inputs to basolateral amygdala neurons. May contribute to the regulation of neurotransmitter release, such as gamma-aminobutyric acid (GABA). Contributes to the regulation of the axonal release of the neurotransmitter dopamine. Reduced KCNA2 expression plays a role in the perception of neuropathic pain after peripheral nerve injury, but not acute pain. Plays a role in the regulation of the time spent in non-rapid eye movement (NREM) sleep. The protein is Potassium voltage-gated channel subfamily A member 2 (KCNA2) of Canis lupus familiaris (Dog).